The chain runs to 345 residues: Aspartate-semialdehyde dehydrogenase (345 aa).

NADP(+) is bound by residues 11–14 (TGQV) and 39–40 (RS). Arginine 99 contacts phosphate. Cysteine 130 acts as the Acyl-thioester intermediate in catalysis. Glutamine 157 lines the substrate pocket. An NADP(+)-binding site is contributed by 160–161 (SG). Lysine 227 is a phosphate binding site. Arginine 249 contributes to the substrate binding site. Histidine 256 (proton acceptor) is an active-site residue. Residue asparagine 325 participates in NADP(+) binding.

Belongs to the aspartate-semialdehyde dehydrogenase family. Homodimer.

It catalyses the reaction L-aspartate 4-semialdehyde + phosphate + NADP(+) = 4-phospho-L-aspartate + NADPH + H(+). It functions in the pathway amino-acid biosynthesis; L-lysine biosynthesis via DAP pathway; (S)-tetrahydrodipicolinate from L-aspartate: step 2/4. The protein operates within amino-acid biosynthesis; L-methionine biosynthesis via de novo pathway; L-homoserine from L-aspartate: step 2/3. Its pathway is amino-acid biosynthesis; L-threonine biosynthesis; L-threonine from L-aspartate: step 2/5. Functionally, catalyzes the NADPH-dependent formation of L-aspartate-semialdehyde (L-ASA) by the reductive dephosphorylation of L-aspartyl-4-phosphate. The protein is Aspartate-semialdehyde dehydrogenase of Mycobacterium bovis (strain ATCC BAA-935 / AF2122/97).